The following is a 128-amino-acid chain: Putative esterase aq_1494 (128 aa).

Asp15 is a catalytic residue.

It belongs to the 4-hydroxybenzoyl-CoA thioesterase family.

This is Putative esterase aq_1494 from Aquifex aeolicus (strain VF5).